Reading from the N-terminus, the 910-residue chain is Adhesion G-protein coupled receptor F1 (910 aa).

A signal peptide spans 1 to 19 (MKVGVLWLISFFTFTDGHG). Residues 20–583 (GFLGKNDGIK…SPFVPSTIFP (564 aa)) are Extracellular-facing. 17 N-linked (GlcNAc...) asparagine glycosylation sites follow: N139, N168, N205, N282, N310, N317, N329, N354, N368, N389, N410, N423, N437, N455, N512, N528, and N553. Positions 148–256 (ERTKIWGTFK…GSFRVFGKAQ (109 aa)) constitute an SEA domain. Intrachain disulfides connect C257/C287 and C275/C299. The 143-residue stretch at 437–579 (NKSQLKRGYS…SILMSPFVPS (143 aa)) folds into the GAIN-B domain. 2 cysteine pairs are disulfide-bonded: C534–C561 and C549–C563. The interval 534–579 (CVFWDFSHLQWNDAGCHLVNETQDIVTCQCTHLTSFSILMSPFVPS) is GPS. The stachel stretch occupies residues 568 to 576 (SFSILMSPF). Residues 584 to 609 (VVKWITYVGLGISIGSLILCLIIEAL) form a helical membrane-spanning segment. The Cytoplasmic segment spans residues 610-621 (FWKQIKKSQTSH). Residues 622 to 646 (TRRICMVNIALSLLIADVWFIVGAT) traverse the membrane as a helical segment. The Extracellular segment spans residues 647 to 658 (VDTTVNPSGVCT). A disulfide bridge connects residues C657 and C733. A helical transmembrane segment spans residues 659–684 (AAVFFTHFFYLSLFFWMLMLGILLAY). At 685-696 (RIILVFHHMAQH) the chain is on the cytoplasmic side. The chain crosses the membrane as a helical span at residues 697-719 (LMMAVGFCLGYGCPLIISVITIA). The Extracellular portion of the chain corresponds to 720–742 (VTQPSNTYKRKDVCWLNWSNGSK). 2 N-linked (GlcNAc...) asparagine glycosylation sites follow: N736 and N739. Residues 743–767 (PLLAFVVPALAIVAVNFVVVLLVLT) traverse the membrane as a helical segment. At 768–784 (KLWRPTVGERLSRDDKA) the chain is on the cytoplasmic side. Residues 785–813 (TIIRVGKSLLILTPLLGLTWGFGIGTIVD) form a helical membrane-spanning segment. Residues 814–816 (SQN) lie on the Extracellular side of the membrane. A helical transmembrane segment spans residues 817 to 842 (LAWHVIFALLNAFQGFFILCFGILLD). Over 843–910 (SKLRQLLFNK…IMLTQFVSNE (68 aa)) the chain is Cytoplasmic.

This sequence belongs to the G-protein coupled receptor 2 family. Adhesion G-protein coupled receptor (ADGR) subfamily. In terms of assembly, heterodimer of 2 chains generated by proteolytic processing; the large extracellular N-terminal fragment and the membrane-bound C-terminal fragment predominantly remain associated and non-covalently linked. In terms of processing, autoproteolytically processed at the GPS region of the GAIN-B domain; this cleavage modulates receptor activity. Post-translationally, glycosylated. Glycosylation at Asn-389 is required for secretion or folding. In terms of tissue distribution, mainly expressed in the kidney. Up-regulated in lung adenocarcinomas and prostate cancers.

The protein localises to the cell membrane. The protein resides in the secreted. With respect to regulation, forms a heterodimer of 2 chains generated by proteolytic processing that remain associated through non-covalent interactions mediated by the GAIN-B domain. In the inactivated receptor, the Stachel sequence (also named stalk) is embedded in the GAIN-B domain, where it adopts a beta-strand conformation. On activation, the Stachel moves into the 7 transmembrane region and adopts a twisted hook-shaped configuration that forms contacts within the receptor, leading to coupling of a G-alpha protein, which activates signaling. The cleaved GAIN-B and N-terminal domains can then dissociate from the rest of the receptor. Its function is as follows. Adhesion G-protein coupled receptor (aGPCR) for N-docosahexaenoylethanolamine (synaptamide), an omega-3 fatty acid lipid highly enriched in the brain. Ligand binding causes a conformation change that triggers signaling via guanine nucleotide-binding proteins (G proteins) and modulates the activity of downstream effectors, such as adenylate cyclase. ADGRF1 is coupled to G(s) G proteins and mediates activation of adenylate cyclase activity. Also able to couple to G(q), G(i) and G(12)/G(13) G proteins; additional evidence is however required to confirm this result in vivo. Involved in the development of neurons and cognitive function. In liver, involved in fat accumulation. In Homo sapiens (Human), this protein is Adhesion G-protein coupled receptor F1.